Here is a 428-residue protein sequence, read N- to C-terminus: Enolase (428 aa).

Residue Q163 coordinates (2R)-2-phosphoglycerate. The Proton donor role is filled by E205. Residues D242, E286, and D313 each contribute to the Mg(2+) site. Residues K338, R367, S368, and K389 each coordinate (2R)-2-phosphoglycerate. Residue K338 is the Proton acceptor of the active site.

This sequence belongs to the enolase family. Mg(2+) is required as a cofactor.

It localises to the cytoplasm. Its subcellular location is the secreted. The protein localises to the cell surface. The catalysed reaction is (2R)-2-phosphoglycerate = phosphoenolpyruvate + H2O. Its pathway is carbohydrate degradation; glycolysis; pyruvate from D-glyceraldehyde 3-phosphate: step 4/5. In terms of biological role, catalyzes the reversible conversion of 2-phosphoglycerate (2-PG) into phosphoenolpyruvate (PEP). It is essential for the degradation of carbohydrates via glycolysis. This is Enolase from Geobacter sulfurreducens (strain ATCC 51573 / DSM 12127 / PCA).